A 179-amino-acid chain; its full sequence is Cytoglobin-2 (179 aa).

The 150-residue stretch at 18 to 167 (PLSDAEMEII…VYWHVTGAYT (150 aa)) folds into the Globin domain. Heme b is bound by residues H81 and H113.

Belongs to the globin family. Monomeric.

Its subcellular location is the cytoplasm. The protein resides in the nucleus. It catalyses the reaction Fe(II)-heme b-[protein] + nitric oxide + O2 = Fe(III)-heme b-[protein] + nitrate. The enzyme catalyses Fe(III)-heme b-[protein] + nitric oxide + H2O = Fe(II)-heme b-[protein] + nitrite + 2 H(+). The catalysed reaction is 2 superoxide + 2 H(+) = H2O2 + O2. It carries out the reaction H2O2 + AH2 = A + 2 H2O. Functionally, probable multifunctional globin with a hexacoordinated heme iron required for the catalysis of various reactions depending on redox condition of the cell as well as oxygen availability. Has a nitric oxide dioxygenase (NOD) activity and is most probably involved in cell-mediated and oxygen-dependent nitric oxide consumption. Under normoxic conditions functions as a nitric oxide dioxygenase (NOD) but under hypoxic conditions the globin may switch its function to that of a nitrite (NO2) reductase (NiR), generating nitric oxide. Could also have peroxidase and superoxide dismutase activities, detoxifying reactive oxygen species and protecting cells against oxidative stress. Also binds dioxygen with low affinity and could function as an oxygen sensor but has probably no function as a respiratory oxygen carrier. The polypeptide is Cytoglobin-2 (Oryzias latipes (Japanese rice fish)).